A 256-amino-acid polypeptide reads, in one-letter code: UPF0644 protein PB2B4.06 (256 aa).

A helical membrane pass occupies residues 34–56 (GVVYAGVSGTCAAAGYMFGNFVM).

It belongs to the UPF0644 family.

It localises to the mitochondrion membrane. In Schizosaccharomyces pombe (strain 972 / ATCC 24843) (Fission yeast), this protein is UPF0644 protein PB2B4.06.